Consider the following 545-residue polypeptide: CTP synthase (545 aa).

Residues 1–266 (MTTNYIFVTG…DDLVCARFGI (266 aa)) form an amidoligase domain region. Ser14 is a binding site for CTP. Ser14 contributes to the UTP binding site. ATP is bound by residues 15–20 (SLGKGI) and Asp72. Residues Asp72 and Glu140 each contribute to the Mg(2+) site. CTP contacts are provided by residues 147 to 149 (DIE), 187 to 192 (KTKPTQ), and Lys223. UTP-binding positions include 187–192 (KTKPTQ) and Lys223. An ATP-binding site is contributed by 239–241 (KDV). The Glutamine amidotransferase type-1 domain maps to 291–542 (TIGMVGKYTE…VKAAGQFQRG (252 aa)). Gly352 serves as a coordination point for L-glutamine. Residue Cys379 is the Nucleophile; for glutamine hydrolysis of the active site. L-glutamine-binding positions include 380–383 (LGMQ), Glu403, and Arg470. Catalysis depends on residues His515 and Glu517.

The protein belongs to the CTP synthase family. Homotetramer.

It catalyses the reaction UTP + L-glutamine + ATP + H2O = CTP + L-glutamate + ADP + phosphate + 2 H(+). The enzyme catalyses L-glutamine + H2O = L-glutamate + NH4(+). The catalysed reaction is UTP + NH4(+) + ATP = CTP + ADP + phosphate + 2 H(+). It functions in the pathway pyrimidine metabolism; CTP biosynthesis via de novo pathway; CTP from UDP: step 2/2. Allosterically activated by GTP, when glutamine is the substrate; GTP has no effect on the reaction when ammonia is the substrate. The allosteric effector GTP functions by stabilizing the protein conformation that binds the tetrahedral intermediate(s) formed during glutamine hydrolysis. Inhibited by the product CTP, via allosteric rather than competitive inhibition. In terms of biological role, catalyzes the ATP-dependent amination of UTP to CTP with either L-glutamine or ammonia as the source of nitrogen. Regulates intracellular CTP levels through interactions with the four ribonucleotide triphosphates. The chain is CTP synthase from Vibrio cholerae serotype O1 (strain ATCC 39541 / Classical Ogawa 395 / O395).